A 517-amino-acid chain; its full sequence is ATP synthase subunit alpha 1 (517 aa).

An ATP-binding site is contributed by 174–181; the sequence is GDRQTGKT.

The protein belongs to the ATPase alpha/beta chains family. In terms of assembly, F-type ATPases have 2 components, CF(1) - the catalytic core - and CF(0) - the membrane proton channel. CF(1) has five subunits: alpha(3), beta(3), gamma(1), delta(1), epsilon(1). CF(0) has three main subunits: a(1), b(2) and c(9-12). The alpha and beta chains form an alternating ring which encloses part of the gamma chain. CF(1) is attached to CF(0) by a central stalk formed by the gamma and epsilon chains, while a peripheral stalk is formed by the delta and b chains.

The protein resides in the cell inner membrane. The enzyme catalyses ATP + H2O + 4 H(+)(in) = ADP + phosphate + 5 H(+)(out). Produces ATP from ADP in the presence of a proton gradient across the membrane. The alpha chain is a regulatory subunit. The polypeptide is ATP synthase subunit alpha 1 (Polaromonas naphthalenivorans (strain CJ2)).